The primary structure comprises 314 residues: Porphobilinogen deaminase (314 aa).

Cysteine 234 carries the S-(dipyrrolylmethanemethyl)cysteine modification.

This sequence belongs to the HMBS family. In terms of assembly, monomer. Dipyrromethane serves as cofactor.

The enzyme catalyses 4 porphobilinogen + H2O = hydroxymethylbilane + 4 NH4(+). It functions in the pathway porphyrin-containing compound metabolism; protoporphyrin-IX biosynthesis; coproporphyrinogen-III from 5-aminolevulinate: step 2/4. Functionally, tetrapolymerization of the monopyrrole PBG into the hydroxymethylbilane pre-uroporphyrinogen in several discrete steps. The chain is Porphobilinogen deaminase from Mycobacterium ulcerans (strain Agy99).